The chain runs to 195 residues: Imidazole glycerol phosphate synthase subunit HisH (195 aa).

The Glutamine amidotransferase type-1 domain maps to 1–195 (MIAVVDLGIG…LRLLENFRRL (195 aa)). The active-site Nucleophile is cysteine 72. Active-site residues include histidine 177 and glutamate 179.

Heterodimer of HisH and HisF.

It localises to the cytoplasm. It catalyses the reaction 5-[(5-phospho-1-deoxy-D-ribulos-1-ylimino)methylamino]-1-(5-phospho-beta-D-ribosyl)imidazole-4-carboxamide + L-glutamine = D-erythro-1-(imidazol-4-yl)glycerol 3-phosphate + 5-amino-1-(5-phospho-beta-D-ribosyl)imidazole-4-carboxamide + L-glutamate + H(+). The catalysed reaction is L-glutamine + H2O = L-glutamate + NH4(+). The protein operates within amino-acid biosynthesis; L-histidine biosynthesis; L-histidine from 5-phospho-alpha-D-ribose 1-diphosphate: step 5/9. IGPS catalyzes the conversion of PRFAR and glutamine to IGP, AICAR and glutamate. The HisH subunit catalyzes the hydrolysis of glutamine to glutamate and ammonia as part of the synthesis of IGP and AICAR. The resulting ammonia molecule is channeled to the active site of HisF. The protein is Imidazole glycerol phosphate synthase subunit HisH of Thermococcus kodakarensis (strain ATCC BAA-918 / JCM 12380 / KOD1) (Pyrococcus kodakaraensis (strain KOD1)).